A 411-amino-acid chain; its full sequence is Mitotic apparatus protein p62 (411 aa).

3 stretches are compositionally biased toward acidic residues: residues 134–156, 183–201, and 246–321; these read AYEV…EEEE, ELDE…EEEI, and DDDE…EEDS. Positions 134-378 are disordered; that stretch reads AYEVGDEDLE…KSPSKPKKEE (245 aa). Residues 351–367 show a composition bias toward basic and acidic residues; sequence GMKEKKTYSLEDMKQDL.

The protein belongs to the nucleoplasmin family. In terms of processing, phosphorylated by CaM-kinase II in vitro.

It is found in the nucleus. Its function is as follows. Required for mitotic progression. Binds to chromatin. This chain is Mitotic apparatus protein p62, found in Lytechinus pictus (Painted sea urchin).